The following is a 257-amino-acid chain: 5'-nucleotidase SurE (257 aa).

A divalent metal cation-binding residues include Asp-8, Asp-9, Ser-40, and Asn-92.

This sequence belongs to the SurE nucleotidase family. A divalent metal cation is required as a cofactor.

It is found in the cytoplasm. It catalyses the reaction a ribonucleoside 5'-phosphate + H2O = a ribonucleoside + phosphate. Its function is as follows. Nucleotidase that shows phosphatase activity on nucleoside 5'-monophosphates. The polypeptide is 5'-nucleotidase SurE (Rhizobium etli (strain ATCC 51251 / DSM 11541 / JCM 21823 / NBRC 15573 / CFN 42)).